Here is a 257-residue protein sequence, read N- to C-terminus: 3-methyl-2-oxobutanoate hydroxymethyltransferase (257 aa).

Positions 44 and 83 each coordinate Mg(2+). 3-methyl-2-oxobutanoate-binding positions include 44–45 (DS), Asp83, and Lys113. Glu115 serves as a coordination point for Mg(2+). Glu182 (proton acceptor) is an active-site residue.

It belongs to the PanB family. As to quaternary structure, homodecamer; pentamer of dimers. Mg(2+) serves as cofactor.

It localises to the cytoplasm. The catalysed reaction is 3-methyl-2-oxobutanoate + (6R)-5,10-methylene-5,6,7,8-tetrahydrofolate + H2O = 2-dehydropantoate + (6S)-5,6,7,8-tetrahydrofolate. Its pathway is cofactor biosynthesis; (R)-pantothenate biosynthesis; (R)-pantoate from 3-methyl-2-oxobutanoate: step 1/2. In terms of biological role, catalyzes the reversible reaction in which hydroxymethyl group from 5,10-methylenetetrahydrofolate is transferred onto alpha-ketoisovalerate to form ketopantoate. In Rippkaea orientalis (strain PCC 8801 / RF-1) (Cyanothece sp. (strain PCC 8801)), this protein is 3-methyl-2-oxobutanoate hydroxymethyltransferase.